Here is a 505-residue protein sequence, read N- to C-terminus: ATP synthase subunit alpha (505 aa).

The segment at 118–138 (VDGLGPINTTNTRPIESPAPG) is disordered. 172 to 179 (GDRQTGKT) is a binding site for ATP.

Belongs to the ATPase alpha/beta chains family. As to quaternary structure, F-type ATPases have 2 components, CF(1) - the catalytic core - and CF(0) - the membrane proton channel. CF(1) has five subunits: alpha(3), beta(3), gamma(1), delta(1), epsilon(1). CF(0) has three main subunits: a(1), b(2) and c(9-12). The alpha and beta chains form an alternating ring which encloses part of the gamma chain. CF(1) is attached to CF(0) by a central stalk formed by the gamma and epsilon chains, while a peripheral stalk is formed by the delta and b chains.

It localises to the cell membrane. It carries out the reaction ATP + H2O + 4 H(+)(in) = ADP + phosphate + 5 H(+)(out). Its function is as follows. Produces ATP from ADP in the presence of a proton gradient across the membrane. The alpha chain is a regulatory subunit. This is ATP synthase subunit alpha from Bacillus cereus (strain ATCC 14579 / DSM 31 / CCUG 7414 / JCM 2152 / NBRC 15305 / NCIMB 9373 / NCTC 2599 / NRRL B-3711).